The primary structure comprises 1026 residues: Multidrug resistance protein MdtC (1026 aa).

Transmembrane regions (helical) follow at residues 15–35 (ILIA…LPVA), 333–353 (EVEE…FLFL), 360–380 (LIPA…MYLC), 387–407 (LSLM…IVVL), 431–451 (VGFT…PLLL), 463–483 (FAVT…TLTP), 528–548 (LVGV…IAIP), 853–873 (LILI…LYES), 897–917 (LFNA…IGIV), 953–973 (PIMM…LSGG), and 984–1004 (ITIV…TPVV).

This sequence belongs to the resistance-nodulation-cell division (RND) (TC 2.A.6) family. MdtC subfamily. Part of a tripartite efflux system composed of MdtA, MdtB and MdtC. MdtC forms a heteromultimer with MdtB.

Its subcellular location is the cell inner membrane. This Salmonella choleraesuis (strain SC-B67) protein is Multidrug resistance protein MdtC.